The following is a 216-amino-acid chain: Ras-related protein RABA1c (216 aa).

A GTP-binding site is contributed by 20-27 (GDSGVGKS). Positions 42–50 (SKSTIGVEF) match the Effector region motif. Residues 68-72 (DTAGQ), 126-129 (NKSD), and 156-157 (SA) contribute to the GTP site. Residues Cys-213 and Cys-214 are each lipidated (S-geranylgeranyl cysteine).

This sequence belongs to the small GTPase superfamily. Rab family.

The protein localises to the cell membrane. Functionally, intracellular vesicle trafficking and protein transport. The polypeptide is Ras-related protein RABA1c (RABA1C) (Arabidopsis thaliana (Mouse-ear cress)).